Reading from the N-terminus, the 419-residue chain is Innexin inx5 (419 aa).

The Cytoplasmic portion of the chain corresponds to 1-21; that stretch reads MFSAVKPLSKYLQFKSIRIYD. Residues 22–42 form a helical membrane-spanning segment; that stretch reads SVFTIHSRCTVVILLTCSLLL. Residues 43-162 are Extracellular-facing; that stretch reads SARQYFGDPI…QTERQYLRYY (120 aa). A helical membrane pass occupies residues 163-183; it reads QWVIILLLFQSFVFYFPSCLW. Residues 184-238 are Cytoplasmic-facing; sequence KVWEGRRLKQLCSEVGDALLSEETYNTRLRMLVKYFTTDYEDMHFCYMAKYVFCE. Residues 239–259 form a helical membrane-spanning segment; it reads VLNFLISVVNIIVLEVFLNGF. Over 260 to 320 the chain is Extracellular; sequence WSKYLRALAT…ILPLNILNEK (61 aa). Residues 321 to 341 traverse the membrane as a helical segment; it reads IFVFLWAWFLLMALMSGLNLL. Residues 342-419 lie on the Cytoplasmic side of the membrane; that stretch reads CRLAMICSRY…ASGSTLESPV (78 aa).

It belongs to the pannexin family. Expressed in the cortex of the pupal CNS and at low levels in the wing imaginal disk.

Its subcellular location is the cell membrane. It localises to the cell junction. The protein resides in the gap junction. Its function is as follows. Structural component of the gap junctions. This chain is Innexin inx5 (Inx5), found in Drosophila melanogaster (Fruit fly).